The sequence spans 100 residues: Urease subunit gamma (100 aa).

It belongs to the urease gamma subunit family. Heterotrimer of UreA (gamma), UreB (beta) and UreC (alpha) subunits. Three heterotrimers associate to form the active enzyme.

Its subcellular location is the cytoplasm. The enzyme catalyses urea + 2 H2O + H(+) = hydrogencarbonate + 2 NH4(+). It participates in nitrogen metabolism; urea degradation; CO(2) and NH(3) from urea (urease route): step 1/1. In Paraburkholderia xenovorans (strain LB400), this protein is Urease subunit gamma.